The sequence spans 435 residues: Trigger factor (435 aa).

Residues 163–248 (GELASVTFSA…VHAVKERKMP (86 aa)) form the PPIase FKBP-type domain.

It belongs to the FKBP-type PPIase family. Tig subfamily.

The protein localises to the cytoplasm. The enzyme catalyses [protein]-peptidylproline (omega=180) = [protein]-peptidylproline (omega=0). Functionally, involved in protein export. Acts as a chaperone by maintaining the newly synthesized protein in an open conformation. Functions as a peptidyl-prolyl cis-trans isomerase. The protein is Trigger factor of Maridesulfovibrio salexigens (strain ATCC 14822 / DSM 2638 / NCIMB 8403 / VKM B-1763) (Desulfovibrio salexigens).